Here is a 277-residue protein sequence, read N- to C-terminus: Cis-2,3-dihydrobiphenyl-2,3-diol dehydrogenase (277 aa).

Residue 9–33 coordinates NAD(+); it reads LITGGASGLGRALVDRFVAERAKVA. Residue S142 coordinates substrate. Y155 (proton acceptor) is an active-site residue.

The protein belongs to the short-chain dehydrogenases/reductases (SDR) family. Homotetramer.

The catalysed reaction is (2R,3S)-3-phenylcyclohexa-3,5-diene-1,2-diol + NAD(+) = biphenyl-2,3-diol + NADH + H(+). The protein operates within xenobiotic degradation; biphenyl degradation; 2-hydroxy-2,4-pentadienoate and benzoate from biphenyl: step 2/4. The polypeptide is Cis-2,3-dihydrobiphenyl-2,3-diol dehydrogenase (bphB) (Pseudomonas putida (Arthrobacter siderocapsulatus)).